Consider the following 218-residue polypeptide: Uracil-DNA glycosylase (218 aa).

Residue D60 is the Proton acceptor of the active site.

It belongs to the uracil-DNA glycosylase (UDG) superfamily. UNG family.

The protein resides in the cytoplasm. The enzyme catalyses Hydrolyzes single-stranded DNA or mismatched double-stranded DNA and polynucleotides, releasing free uracil.. Excises uracil residues from the DNA which can arise as a result of misincorporation of dUMP residues by DNA polymerase or due to deamination of cytosine. In Francisella philomiragia subsp. philomiragia (strain ATCC 25017 / CCUG 19701 / FSC 153 / O#319-036), this protein is Uracil-DNA glycosylase.